Here is a 244-residue protein sequence, read N- to C-terminus: Derlin-2.1 (244 aa).

At 1 to 21 (MAQAVEEWYKQMPIITRSYLT) the chain is on the cytoplasmic side. Residues 22–42 (AAVVTTVGCSLEIISPYNLYL) form a helical membrane-spanning segment. Topologically, residues 43-96 (NPTLVVKQYQFWRLVTNFLYFRKMDLDFLFHMFFLARYCKLLEENSFRGKTADF) are lumenal. The helical transmembrane segment at 97 to 117 (LYMLLFGATVLTGIVLIGGMI) threads the bilayer. At 118 to 121 (PYLS) the chain is on the cytoplasmic side. A helical membrane pass occupies residues 122-142 (VSFSKIIFLSNSLTFMMVYVW). The Lumenal portion of the chain corresponds to 143–152 (SKQNPYIHMS). A helical transmembrane segment spans residues 153–173 (FLGLFTFTAAYLPWVLLGFSI). Over 174 to 244 (LVGASAWGDF…HAPFDEIHQD (71 aa)) the chain is Cytoplasmic.

This sequence belongs to the derlin family.

It localises to the endoplasmic reticulum membrane. May be involved in the degradation process of specific misfolded endoplasmic reticulum (ER) luminal proteins. The protein is Derlin-2.1 (DER2.1) of Arabidopsis thaliana (Mouse-ear cress).